Consider the following 310-residue polypeptide: Tagatose-6-phosphate kinase (310 aa).

The protein belongs to the carbohydrate kinase PfkB family. LacC subfamily.

It catalyses the reaction D-tagatofuranose 6-phosphate + ATP = D-tagatofuranose 1,6-bisphosphate + ADP + H(+). The protein operates within carbohydrate metabolism; D-tagatose 6-phosphate degradation; D-glyceraldehyde 3-phosphate and glycerone phosphate from D-tagatose 6-phosphate: step 1/2. In Streptococcus agalactiae serotype Ia (strain ATCC 27591 / A909 / CDC SS700), this protein is Tagatose-6-phosphate kinase.